We begin with the raw amino-acid sequence, 760 residues long: Phosphatidylinositol N-acetylglucosaminyltransferase subunit Q (760 aa).

A run of 5 helical transmembrane segments spans residues 278–298 (TVAS…WLHG), 349–371 (LYHI…HILW), 378–400 (CLGL…FHIY), 446–468 (LFIG…LYYL), and 475–497 (LLVV…LPLY). Residues 696-748 (LAVGVEGPCQDEPPSPRHPLAPSAEQHPASGGLKQSLTPVPSGPGPSLPEPHG) form a disordered region.

It belongs to the PIGQ family. As to quaternary structure, component of the glycosylphosphatidylinositol-N-acetylglucosaminyltransferase (GPI-GnT) complex composed at least by PIGA, PIGC, PIGH, PIGP, PIGQ, PIGY and DPM2. Interacts with PIGA, PIGH and PIGC.

Its subcellular location is the membrane. Its pathway is glycolipid biosynthesis; glycosylphosphatidylinositol-anchor biosynthesis. Functionally, part of the glycosylphosphatidylinositol-N-acetylglucosaminyltransferase (GPI-GnT) complex that catalyzes the transfer of N-acetylglucosamine from UDP-N-acetylglucosamine to phosphatidylinositol and participates in the first step of GPI biosynthesis. This Homo sapiens (Human) protein is Phosphatidylinositol N-acetylglucosaminyltransferase subunit Q.